The sequence spans 260 residues: UPF0246 protein APP7_0648 (260 aa).

It belongs to the UPF0246 family.

The polypeptide is UPF0246 protein APP7_0648 (Actinobacillus pleuropneumoniae serotype 7 (strain AP76)).